A 177-amino-acid polypeptide reads, in one-letter code: Large ribosomal subunit protein uL30 (177 aa).

The protein belongs to the universal ribosomal protein uL30 family. Part of the 50S ribosomal subunit.

This chain is Large ribosomal subunit protein uL30, found in Pyrobaculum islandicum (strain DSM 4184 / JCM 9189 / GEO3).